Here is a 199-residue protein sequence, read N- to C-terminus: Protein-methionine-sulfoxide reductase heme-binding subunit MsrQ (199 aa).

5 consecutive transmembrane segments (helical) span residues 13–33 (VLLHLAGFLPLLWLILSVDQG), 79–99 (LLGLWCFFWATLHLVSYALLE), 120–140 (LGIISWLILLALAVTSPQIMM), 147–167 (WQKLHNFVYLVAILTPIHYLW), and 169–189 (VKTLSPQPILYALAALILLLL).

Belongs to the MsrQ family. As to quaternary structure, heterodimer of a catalytic subunit (MsrP) and a heme-binding subunit (MsrQ). Requires FMN as cofactor. The cofactor is heme b.

It localises to the cell inner membrane. Part of the MsrPQ system that repairs oxidized periplasmic proteins containing methionine sulfoxide residues (Met-O), using respiratory chain electrons. Thus protects these proteins from oxidative-stress damage caused by reactive species of oxygen and chlorine generated by the host defense mechanisms. MsrPQ is essential for the maintenance of envelope integrity under bleach stress, rescuing a wide series of structurally unrelated periplasmic proteins from methionine oxidation. MsrQ provides electrons for reduction to the reductase catalytic subunit MsrP, using the quinone pool of the respiratory chain. This chain is Protein-methionine-sulfoxide reductase heme-binding subunit MsrQ, found in Pectobacterium atrosepticum (strain SCRI 1043 / ATCC BAA-672) (Erwinia carotovora subsp. atroseptica).